The chain runs to 409 residues: Gamma-glutamyl phosphate reductase (409 aa).

This sequence belongs to the gamma-glutamyl phosphate reductase family.

The protein localises to the cytoplasm. The catalysed reaction is L-glutamate 5-semialdehyde + phosphate + NADP(+) = L-glutamyl 5-phosphate + NADPH + H(+). Its pathway is amino-acid biosynthesis; L-proline biosynthesis; L-glutamate 5-semialdehyde from L-glutamate: step 2/2. In terms of biological role, catalyzes the NADPH-dependent reduction of L-glutamate 5-phosphate into L-glutamate 5-semialdehyde and phosphate. The product spontaneously undergoes cyclization to form 1-pyrroline-5-carboxylate. In Mycobacterium leprae (strain TN), this protein is Gamma-glutamyl phosphate reductase.